The following is a 66-amino-acid chain: UPF0434 protein RPC_0266 (66 aa).

It belongs to the UPF0434 family.

The chain is UPF0434 protein RPC_0266 from Rhodopseudomonas palustris (strain BisB18).